We begin with the raw amino-acid sequence, 70 residues long: Brevinin-1S (70 aa).

An N-terminal signal peptide occupies residues 1-22; the sequence is MFTLKKSLLLLFFLGTINLSLC. The propeptide occupies 23-44; sequence EEERNAEEERRDDPEERDVEVE. The cysteines at positions 64 and 70 are disulfide-linked.

It belongs to the frog skin active peptide (FSAP) family. Brevinin subfamily. As to expression, expressed by the skin glands.

It localises to the secreted. In terms of biological role, antimicrobial peptide. This is Brevinin-1S from Odorrana schmackeri (Schmacker's frog).